The sequence spans 468 residues: 3-isopropylmalate dehydratase large subunit (468 aa).

[4Fe-4S] cluster contacts are provided by Cys-349, Cys-409, and Cys-412.

Belongs to the aconitase/IPM isomerase family. LeuC type 1 subfamily. In terms of assembly, heterodimer of LeuC and LeuD. [4Fe-4S] cluster serves as cofactor.

The enzyme catalyses (2R,3S)-3-isopropylmalate = (2S)-2-isopropylmalate. It functions in the pathway amino-acid biosynthesis; L-leucine biosynthesis; L-leucine from 3-methyl-2-oxobutanoate: step 2/4. Functionally, catalyzes the isomerization between 2-isopropylmalate and 3-isopropylmalate, via the formation of 2-isopropylmaleate. In Roseobacter denitrificans (strain ATCC 33942 / OCh 114) (Erythrobacter sp. (strain OCh 114)), this protein is 3-isopropylmalate dehydratase large subunit.